The following is a 350-amino-acid chain: 3-methylornithine synthase (350 aa).

Residues 57–279 (NRVFLNCFIY…PKRLIPASLD (223 aa)) form the Radical SAM core domain. 2 residues coordinate [4Fe-4S] cluster: C71 and C75. F77 serves as a coordination point for S-adenosyl-L-methionine. C78 contacts [4Fe-4S] cluster. (3R)-3-methyl-D-ornithine-binding residues include D112, S146, and Y169. E171, R182, and R190 together coordinate S-adenosyl-L-methionine. R235 is a binding site for (3R)-3-methyl-D-ornithine. L240 and Q242 together coordinate S-adenosyl-L-methionine. 3 residues coordinate (3R)-3-methyl-D-ornithine: S277, T298, and S299.

It belongs to the radical SAM superfamily. PylB family. [4Fe-4S] cluster is required as a cofactor. It depends on S-adenosyl-L-methionine as a cofactor.

The enzyme catalyses L-lysine = (3R)-3-methyl-D-ornithine. The protein operates within amino-acid biosynthesis; L-pyrrolysine biosynthesis. In terms of biological role, catalyzes the isomerization of L-lysine to (3R)-3-methyl-D-ornithine via a radical-based mechanism, a step in the biosynthesis pathway of pyrrolysine. Also catalyzes the reverse reaction in vitro, converting (3R)-3-methyl-D-ornithine into L-lysine. The protein is 3-methylornithine synthase of Methanosarcina barkeri (strain Fusaro / DSM 804).